The following is a 404-amino-acid chain: uncharacterized protein (404 aa).

The next 8 membrane-spanning stretches (helical) occupy residues 1 to 21 (MNVLWGLLGAVAIIAIAFLFS), 32 to 52 (VIVGLCTQVAFGYIVLKWEAG), 89 to 109 (AFALSVLPVIIFFSALIAVLY), 182 to 202 (LFGYALLGIPIEYLLAASFMA), 261 to 281 (LAFVALIAVVNGILGGAFGLF), 285 to 305 (GVTLESILGYVFSPIAFLIGV), 344 to 364 (ATIISFALCGFANFSSIAIML), and 384 to 404 (KAVLAGTLANLLSAAIAGMFI).

The protein belongs to the concentrative nucleoside transporter (CNT) (TC 2.A.41) family.

Its subcellular location is the cell membrane. This is an uncharacterized protein from Bacillus subtilis (strain 168).